The sequence spans 125 residues: Small ribosomal subunit protein uS12c (125 aa).

Belongs to the universal ribosomal protein uS12 family. As to quaternary structure, part of the 30S ribosomal subunit.

The protein resides in the plastid. It is found in the chloroplast. Functionally, with S4 and S5 plays an important role in translational accuracy. Located at the interface of the 30S and 50S subunits. This Oltmannsiellopsis viridis (Marine flagellate) protein is Small ribosomal subunit protein uS12c (rps12).